A 195-amino-acid chain; its full sequence is Probable molybdenum cofactor guanylyltransferase (195 aa).

Residues 9-11 (LAG), Lys21, Asp69, and Asp100 contribute to the GTP site. Asp100 contributes to the Mg(2+) binding site.

The protein belongs to the MobA family. The cofactor is Mg(2+).

The protein resides in the cytoplasm. The catalysed reaction is Mo-molybdopterin + GTP + H(+) = Mo-molybdopterin guanine dinucleotide + diphosphate. Functionally, transfers a GMP moiety from GTP to Mo-molybdopterin (Mo-MPT) cofactor (Moco or molybdenum cofactor) to form Mo-molybdopterin guanine dinucleotide (Mo-MGD) cofactor. This is Probable molybdenum cofactor guanylyltransferase from Geobacillus sp. (strain WCH70).